The sequence spans 136 residues: Acyl-CoA thioesterase YbgC (136 aa).

D18 is a catalytic residue.

This sequence belongs to the 4-hydroxybenzoyl-CoA thioesterase family.

In terms of biological role, displays acyl-CoA thioesterase activity with short chain aliphatic acyl-CoA thioesters, such as propionyl-CoA and butyryl-CoA. Enzyme activity is relatively low, suggesting that the acyl-CoA thioesters used in the assays are not the physiological substrates. Has no detectable activity with 4-hydroxybenzoyl-CoA, lauroyl-CoA (C12:0), arachidoyl-CoA (C20:0) and arachidonoyl-CoA (C20:4). This is Acyl-CoA thioesterase YbgC (ybgC) from Haemophilus influenzae (strain ATCC 51907 / DSM 11121 / KW20 / Rd).